We begin with the raw amino-acid sequence, 235 residues long: Small ribosomal subunit protein uS2 (235 aa).

It belongs to the universal ribosomal protein uS2 family.

This is Small ribosomal subunit protein uS2 from Synechococcus sp. (strain RCC307).